A 148-amino-acid chain; its full sequence is Ubiquitin-like protein 4A (148 aa).

One can recognise a Ubiquitin-like domain in the interval 1 to 76 (MQLTVKALKG…LNLMVKEQVA (76 aa)).

As to quaternary structure, component of the bag6/bat3 complex.

The protein resides in the cytoplasm. The protein localises to the cytosol. It localises to the nucleus. As part of a cytosolic protein quality control complex, the bag6/bat3 complex, maintains misfolded and hydrophobic patches-containing proteins in a soluble state and participates in their proper delivery to the endoplasmic reticulum or alternatively can promote their sorting to the proteasome where they undergo degradation. The bag6/bat3 complex is involved in the post-translational delivery of tail-anchored/type II transmembrane proteins to the endoplasmic reticulum membrane. Similarly, the bag6/bat3 complex also functions as a sorting platform for proteins of the secretory pathway that are mislocalized to the cytosol either delivering them to the proteasome for degradation or to the endoplasmic reticulum. The bag6/bat3 complex also plays a role in the endoplasmic reticulum-associated degradation (ERAD), a quality control mechanism that eliminates unwanted proteins of the endoplasmic reticulum through their retrotranslocation to the cytosol and their targeting to the proteasome. It maintains these retrotranslocated proteins in an unfolded yet soluble state condition in the cytosol to ensure their proper delivery to the proteasome. The polypeptide is Ubiquitin-like protein 4A (ubl4a) (Xenopus tropicalis (Western clawed frog)).